A 236-amino-acid chain; its full sequence is Purine nucleoside phosphorylase DeoD-type (236 aa).

H5 contacts a purine D-ribonucleoside. Phosphate-binding positions include G21, R25, R44, and 88–91 (RVGT). A purine D-ribonucleoside contacts are provided by residues 180-182 (EME) and 204-205 (SD). D205 acts as the Proton donor in catalysis.

Belongs to the PNP/UDP phosphorylase family. Homohexamer; trimer of homodimers.

It carries out the reaction a purine D-ribonucleoside + phosphate = a purine nucleobase + alpha-D-ribose 1-phosphate. It catalyses the reaction a purine 2'-deoxy-D-ribonucleoside + phosphate = a purine nucleobase + 2-deoxy-alpha-D-ribose 1-phosphate. Its function is as follows. Catalyzes the reversible phosphorolytic breakdown of the N-glycosidic bond in the beta-(deoxy)ribonucleoside molecules, with the formation of the corresponding free purine bases and pentose-1-phosphate. This chain is Purine nucleoside phosphorylase DeoD-type, found in Shewanella sp. (strain MR-4).